The sequence spans 486 residues: Serine/threonine-protein kinase 4 (486 aa).

Residues 29–280 (FDVLEKLGEG…AIQLLQHPFV (252 aa)) form the Protein kinase domain. Residues 35–43 (LGEGSYGSV) and Lys-58 contribute to the ATP site. The active-site Proton acceptor is Asp-148. A Phosphothreonine; by autocatalysis modification is found at Thr-182. The stretch at 288-324 (ILRDLINEAMDIKLKRQEAQQRELDQEDEENSEEDET) forms a coiled coil. The tract at residues 305–332 (EAQQRELDQEDEENSEEDETDSGTMVRA) is disordered. The span at 312–325 (DQEDEENSEEDETD) shows a compositional bias: acidic residues. Residues 432–479 (YEFLKTWSVDELQRRLSALDPMMEQEIEEIRQKYQSKRQPILDAIEAK) form the SARAH domain.

It belongs to the protein kinase superfamily. STE Ser/Thr protein kinase family. STE20 subfamily. Homodimer; mediated via the coiled-coil region. It depends on Mg(2+) as a cofactor. Post-translationally, proteolytically cleaved by caspase-3 during apoptosis at Asp-325 resulting in a 37 kDa form. Proteolytic cleavage results in kinase activation and nuclear translocation of the truncated form (MST1/N).

It is found in the cytoplasm. It localises to the nucleus. It carries out the reaction L-seryl-[protein] + ATP = O-phospho-L-seryl-[protein] + ADP + H(+). The catalysed reaction is L-threonyl-[protein] + ATP = O-phospho-L-threonyl-[protein] + ADP + H(+). Its activity is regulated as follows. The C-terminal non-catalytic region inhibits the kinase activity, the enzyme is activated by caspase-cleavage. Homodimerization and autophosphorylation of Thr-182 is also required for full activation. Stress-activated, pro-apoptotic kinase which, following caspase-cleavage, enters the nucleus and induces chromatin condensation followed by internucleosomal DNA fragmentation. Key component of the Hippo signaling pathway which plays a pivotal role in organ size control and tumor suppression by restricting proliferation and promoting apoptosis. The core of this pathway is composed of a kinase cascade wherein STK3/MST2 and STK4/MST1, in complex with its regulatory protein SAV1, phosphorylates and activates LATS1/2 in complex with its regulatory protein MOB1, which in turn phosphorylates and inactivates YAP1 oncoprotein and WWTR1/TAZ. Phosphorylation of YAP1 by LATS2 inhibits its translocation into the nucleus to regulate cellular genes important for cell proliferation, cell death, and cell migration. Phosphorylates 'Ser-14' of histone H2B (H2BS14ph) during apoptosis. Phosphorylates FOXO3 upon oxidative stress, which results in its nuclear translocation and cell death initiation. The protein is Serine/threonine-protein kinase 4 (STK4) of Gallus gallus (Chicken).